The following is a 65-amino-acid chain: Large ribosomal subunit protein bL35 (65 aa).

Belongs to the bacterial ribosomal protein bL35 family.

This chain is Large ribosomal subunit protein bL35, found in Syntrophobacter fumaroxidans (strain DSM 10017 / MPOB).